A 235-amino-acid chain; its full sequence is V-type proton ATPase subunit E2 (235 aa).

M1 carries the post-translational modification N-acetylmethionine. Residues 8 to 64 (KQIQQMVRFIRQEAEEKANEISISAEEEFNIERLQLLESAKRKLRQDYDRKLKQVDI) are a coiled coil.

This sequence belongs to the V-ATPase E subunit family. In terms of assembly, V-ATPase is a heteromultimeric enzyme composed of a peripheral catalytic V1 complex (components A to H) attached to an integral membrane V0 proton pore complex (components: a, c, c'', d and e).

It localises to the vacuole membrane. In terms of biological role, subunit of the peripheral V1 complex of vacuolar ATPase essential for assembly or catalytic function. V-ATPase is responsible for acidifying a variety of intracellular compartments in eukaryotic cells. The sequence is that of V-type proton ATPase subunit E2 (VHA-E2) from Arabidopsis thaliana (Mouse-ear cress).